The sequence spans 334 residues: Holliday junction branch migration complex subunit RuvB (334 aa).

The interval 4 to 184 (ADRLIQPQLQ…FGIPLRLEFY (181 aa)) is large ATPase domain (RuvB-L). ATP-binding positions include Arg24, Gly65, Lys68, Thr69, Thr70, 131–133 (EDY), Arg174, Tyr184, and Arg221. Residue Thr69 coordinates Mg(2+). Positions 185–255 (NVKDLSTIVT…VAEHALDLLD (71 aa)) are small ATPAse domain (RuvB-S). The tract at residues 258 to 334 (GEGFDYMDRK…YLHFGMIKPE (77 aa)) is head domain (RuvB-H). DNA is bound by residues Arg294, Arg313, and Arg318.

This sequence belongs to the RuvB family. Homohexamer. Forms an RuvA(8)-RuvB(12)-Holliday junction (HJ) complex. HJ DNA is sandwiched between 2 RuvA tetramers; dsDNA enters through RuvA and exits via RuvB. An RuvB hexamer assembles on each DNA strand where it exits the tetramer. Each RuvB hexamer is contacted by two RuvA subunits (via domain III) on 2 adjacent RuvB subunits; this complex drives branch migration. In the full resolvosome a probable DNA-RuvA(4)-RuvB(12)-RuvC(2) complex forms which resolves the HJ.

It is found in the cytoplasm. It catalyses the reaction ATP + H2O = ADP + phosphate + H(+). In terms of biological role, the RuvA-RuvB-RuvC complex processes Holliday junction (HJ) DNA during genetic recombination and DNA repair, while the RuvA-RuvB complex plays an important role in the rescue of blocked DNA replication forks via replication fork reversal (RFR). RuvA specifically binds to HJ cruciform DNA, conferring on it an open structure. The RuvB hexamer acts as an ATP-dependent pump, pulling dsDNA into and through the RuvAB complex. RuvB forms 2 homohexamers on either side of HJ DNA bound by 1 or 2 RuvA tetramers; 4 subunits per hexamer contact DNA at a time. Coordinated motions by a converter formed by DNA-disengaged RuvB subunits stimulates ATP hydrolysis and nucleotide exchange. Immobilization of the converter enables RuvB to convert the ATP-contained energy into a lever motion, pulling 2 nucleotides of DNA out of the RuvA tetramer per ATP hydrolyzed, thus driving DNA branch migration. The RuvB motors rotate together with the DNA substrate, which together with the progressing nucleotide cycle form the mechanistic basis for DNA recombination by continuous HJ branch migration. Branch migration allows RuvC to scan DNA until it finds its consensus sequence, where it cleaves and resolves cruciform DNA. In Shewanella sp. (strain MR-4), this protein is Holliday junction branch migration complex subunit RuvB.